The primary structure comprises 225 residues: PKHD-type hydroxylase Smlt1146 (225 aa).

The Fe2OG dioxygenase domain occupies 78–177 (KYLPPRFNRY…RVASFFWVQS (100 aa)). Residues H96, D98, and H158 each contribute to the Fe cation site. R168 contributes to the 2-oxoglutarate binding site.

Fe(2+) serves as cofactor. The cofactor is L-ascorbate.

The protein is PKHD-type hydroxylase Smlt1146 of Stenotrophomonas maltophilia (strain K279a).